The primary structure comprises 320 residues: Endochitinase (320 aa).

Positions 1-23 (MKRTLKVSFFILCLLPLFLGSKA) are cleaved as a signal peptide. The 41-residue stretch at 24–64 (EQCGSQAGGAVCPNGLCCSKFGFCGSTDPYCGDGCQSQCKS) folds into the Chitin-binding type-1 domain. Intrachain disulfides connect cysteine 26-cysteine 41, cysteine 35-cysteine 47, cysteine 40-cysteine 54, cysteine 58-cysteine 62, cysteine 101-cysteine 163, cysteine 175-cysteine 182, and cysteine 281-cysteine 313. Residue glutamate 145 is the Proton donor of the active site.

It belongs to the glycosyl hydrolase 19 family. Chitinase class I subfamily.

The enzyme catalyses Random endo-hydrolysis of N-acetyl-beta-D-glucosaminide (1-&gt;4)-beta-linkages in chitin and chitodextrins.. Its function is as follows. Defense against chitin-containing fungal pathogens. The protein is Endochitinase of Pisum sativum (Garden pea).